Here is a 387-residue protein sequence, read N- to C-terminus: Phosphoglycerate kinase (387 aa).

Substrate contacts are provided by residues 21-23 (DLN), arginine 36, 59-62 (HLGR), arginine 113, and arginine 146. ATP-binding positions include lysine 197, glutamate 314, and 340–343 (GGDT).

Belongs to the phosphoglycerate kinase family. In terms of assembly, monomer.

Its subcellular location is the cytoplasm. It catalyses the reaction (2R)-3-phosphoglycerate + ATP = (2R)-3-phospho-glyceroyl phosphate + ADP. It participates in carbohydrate degradation; glycolysis; pyruvate from D-glyceraldehyde 3-phosphate: step 2/5. This chain is Phosphoglycerate kinase, found in Pseudomonas putida (strain GB-1).